The following is a 156-amino-acid chain: Transcription elongation factor GreA (156 aa).

Positions 2 to 78 (AKEIILTQEG…MISKAKLIED (77 aa)) form a coiled coil.

Belongs to the GreA/GreB family.

Functionally, necessary for efficient RNA polymerase transcription elongation past template-encoded arresting sites. The arresting sites in DNA have the property of trapping a certain fraction of elongating RNA polymerases that pass through, resulting in locked ternary complexes. Cleavage of the nascent transcript by cleavage factors such as GreA or GreB allows the resumption of elongation from the new 3'terminus. GreA releases sequences of 2 to 3 nucleotides. This Mesoplasma florum (strain ATCC 33453 / NBRC 100688 / NCTC 11704 / L1) (Acholeplasma florum) protein is Transcription elongation factor GreA.